The sequence spans 161 residues: Allophycocyanin alpha-B chain (161 aa).

At Asn-71 the chain carries N4-methylasparagine. Cys-81 is a binding site for (2R,3E)-phycocyanobilin.

This sequence belongs to the phycobiliprotein family. In terms of processing, contains one covalently linked bilin chromophore.

It is found in the plastid. The protein localises to the chloroplast thylakoid membrane. Allophycocyanin is a photosynthetic bile pigment-protein complex with maximum absorption at approximately 650 nanometers. The protein is Allophycocyanin alpha-B chain (apcD) of Pyropia yezoensis (Susabi-nori).